The sequence spans 612 residues: Large ribosomal subunit assembly factor BipA (612 aa).

The tr-type G domain maps to 5-200 (NDLRNIAIIA…TIIKHVPAPV (196 aa)). GTP is bound by residues 17–22 (DHGKTT) and 130–133 (NKID).

Belongs to the TRAFAC class translation factor GTPase superfamily. Classic translation factor GTPase family. BipA subfamily. As to quaternary structure, monomer.

It is found in the cytoplasm. The enzyme catalyses GTP + H2O = GDP + phosphate + H(+). A 50S ribosomal subunit assembly protein with GTPase activity, required for 50S subunit assembly at low temperatures, may also play a role in translation. Binds GTP and analogs. Binds the 70S ribosome between the 30S and 50S subunits, in a similar position as ribosome-bound EF-G; it contacts a number of ribosomal proteins, both rRNAs and the A-site tRNA. This chain is Large ribosomal subunit assembly factor BipA, found in Bacillus subtilis (strain 168).